A 79-amino-acid polypeptide reads, in one-letter code: Virulence protein MsgA (79 aa).

The protein belongs to the DinI family.

Functionally, affects survival in macrophages. This is Virulence protein MsgA (msgA) from Salmonella typhi.